Consider the following 1311-residue polypeptide: Zinc finger protein 521 (1311 aa).

The C2H2-type 1; degenerate zinc-finger motif lies at 47–67 (HSCDSCLQVFESLSDITEHKI). The tract at residues 81–108 (DPSCSWPASSPSSKDQTSPSHGEGCDFG) is disordered. Low complexity predominate over residues 83–102 (SCSWPASSPSSKDQTSPSHG). 7 consecutive C2H2-type zinc fingers follow at residues 118–140 (YPCQ…EQSH), 146–168 (FKCT…IKLH), 174–196 (YHCS…LKTH), 202–224 (YKCA…MQVH), 246–269 (QKCS…AECH), 281–304 (LQCM…EQVH), and 310–332 (NSCS…MDSH). The tract at residues 357-398 (TTPDSNLSVDSSTMVEAAPPIPKSRGRKRAAQQTSDMTGPSS) is disordered. 2 stretches are compositionally biased toward polar residues: residues 359–370 (PDSNLSVDSSTM) and 387–398 (AQQTSDMTGPSS). The segment at 405–429 (YSCIYCNKQLFSSLAVLQIHLKTMH) adopts a C2H2-type 9; degenerate zinc-finger fold. 3 consecutive C2H2-type zinc fingers follow at residues 437-460 (HICQ…KQVH), 477-500 (YQCN…RCSH), and 513-536 (FFCP…RQVH). At Ser-546 the chain carries Phosphoserine. A C2H2-type 13; atypical zinc finger spans residues 560-585 (YSCSYCTNSPIFNSVLKLNKHIKENH). Ser-605 and Ser-608 each carry phosphoserine. 7 consecutive C2H2-type zinc fingers follow at residues 634 to 656 (YICN…LKTH), 664 to 686 (LTCP…VTIH), 694 to 717 (YICE…LDMH), 722 to 745 (FRCT…AVKH), 752 to 775 (YRCT…KHNH), 783 to 805 (HKCI…ITTH), and 809 to 832 (YNCR…REKH). A disordered region spans residues 863 to 883 (TNSQESHNSHDGSEEDVDSSE). Residues 886 to 908 (YGCDICGAAYTMETLLQNHQLRD) form a C2H2-type 21; degenerate zinc finger. 3 consecutive C2H2-type zinc fingers follow at residues 930-952 (YKCN…MQTH), 959-981 (YMCP…KVTH), and 1020-1042 (FRCV…GTFH). The segment at 1065-1083 (YKCASCLKEFRSKQDLVKL) adopts a C2H2-type 25; degenerate zinc-finger fold. Residues 1105 to 1119 (PGLSLPPGASRPGLG) show a composition bias toward low complexity. The segment at 1105–1136 (PGLSLPPGASRPGLGQNESLSAMEGKGKAGGL) is disordered. 5 C2H2-type zinc fingers span residues 1138–1161 (TRCS…QTVH), 1195–1217 (YQCI…VANH), 1225–1247 (HECK…LIEH), 1256–1279 (FKCP…FSAH), and 1286–1309 (YDCT…MTQH). Lys-1146 participates in a covalent cross-link: Glycyl lysine isopeptide (Lys-Gly) (interchain with G-Cter in SUMO2).

Belongs to the krueppel C2H2-type zinc-finger protein family. As to quaternary structure, interacts with EBF1. Interacts with SMAD1 and SMAD4. In terms of tissue distribution, widely expressed. Expressed in all B-cell stages.

The protein localises to the nucleus. Functionally, transcription factor that can both act as an activator or a repressor depending on the context. Involved in BMP signaling and in the regulation of the immature compartment of the hematopoietic system. Associates with SMADs in response to BMP2 leading to activate transcription of BMP target genes. Acts as a transcriptional repressor via its interaction with EBF1, a transcription factor involved specification of B-cell lineage; this interaction preventing EBF1 to bind DNA and activate target genes. This Mus musculus (Mouse) protein is Zinc finger protein 521 (Znf521).